The primary structure comprises 615 residues: Cilia- and flagella-associated protein 52 (615 aa).

11 WD repeats span residues 54–98 (GHSD…LIHR), 101–142 (LHKV…AICG), 145–184 (CNTNFTNCVKFFNNSPDKLITAGNFNMNVWTYDAGNNKLR), 232–275 (GPAK…AGTK), 320–359 (AHNDKINGMAFPNEYSEVFATCGTGFIRLWHLTTCRELLR), 362–401 (VPNLECFCIAFTTDGSAILSGWSDGKIRAFGPQSGKIIFT), 405–444 (AHQKAVTAIASTADSSRILSGGEEGMVRVWRIGRTSQTLE), 449–488 (DHKGPVNCIRIKGSGDECVSASSDGSCILWDLHTFKRRTS), 490–529 (FANTFFKSVVYHPDESQLVTAGTDRKVTYWDAYDGNAIRI), 533–572 (SDLDEVNALAVDRDGEALVSGGGDKLVKLWGYDEGHCYFV), and 575–614 (AHSGAITAVGVTPDKQRIVSVGTEGGIFIWDYQRPQTLAD).

It belongs to the CFAP52 family.

It is found in the cytoplasm. Its subcellular location is the cell projection. It localises to the cilium. The protein localises to the flagellum. May play a role in cell growth and/or survival. This is Cilia- and flagella-associated protein 52 from Chlamydomonas reinhardtii (Chlamydomonas smithii).